We begin with the raw amino-acid sequence, 386 residues long: Protein DOM34 (386 aa).

It belongs to the eukaryotic release factor 1 family. Pelota subfamily. As to quaternary structure, monomer. Component of the Dom34-Hbs1 complex, also named Pelota-HBS1L complex, composed of DOM34 and HBS1. It depends on a divalent metal cation as a cofactor.

The protein localises to the cytoplasm. Component of the Dom34-Hbs1 complex, a complex that recognizes stalled ribosomes and triggers the No-Go Decay (NGD) pathway. In the Dom34-Hbs1 complex, DOM34 recognizes ribosomes stalled at the 3' end of an mRNA and engages stalled ribosomes by destabilizing mRNA in the mRNA channel. Following ribosome-binding, the Dom34-Hbs1 complex promotes the disassembly of stalled ribosomes, followed by degradation of damaged mRNAs as part of the NGD pathway. The Dom34-Hbs1 complex is also involved in non-functional rRNA decay. This Saccharomyces cerevisiae (strain ATCC 204508 / S288c) (Baker's yeast) protein is Protein DOM34.